Here is a 388-residue protein sequence, read N- to C-terminus: Zinc finger protein ubi-d4 A (388 aa).

The interval 60–190 is disordered; that stretch reads GPGSAPGQLY…AKGKGIGSAR (131 aa). Composition is skewed to basic and acidic residues over residues 97-107 and 123-137; these read PDPEQMLKKEG and DPIE…RDDD. Residues 156–170 show a composition bias toward acidic residues; it reads PDDFLDDLDDEDYEE. The segment at 205-228 adopts a C2H2-type zinc-finger fold; the sequence is YACDICGKRYKNRPGLSYHYAHSH. Positions 233-264 are disordered; it reads EGAGAEDKEDSQPPTPIMHRPEEQKSKKGPDG. Residues 251–262 are compositionally biased toward basic and acidic residues; the sequence is HRPEEQKSKKGP. 2 consecutive PHD-type zinc fingers follow at residues 269 to 329 and 326 to 376; these read NNYC…CKCC and CKCC…CLDL.

Belongs to the requiem/DPF family.

The protein localises to the cytoplasm. It localises to the nucleus. May be a transcription factor required for the apoptosis response following survival factor withdrawal from myeloid cells. Might also have a role in the development and maturation of lymphoid cells. This is Zinc finger protein ubi-d4 A (req-a) from Xenopus laevis (African clawed frog).